Reading from the N-terminus, the 319-residue chain is Cobalamin biosynthesis protein CobD (319 aa).

Transmembrane regions (helical) follow at residues 56–76, 78–98, 153–173, 204–224, and 296–316; these read VMWL…LALA, GIHP…ALAG, VDGI…LAMA, VANF…AVLC, and LMWV…YWLV.

This sequence belongs to the CobD/CbiB family.

It localises to the cell membrane. It functions in the pathway cofactor biosynthesis; adenosylcobalamin biosynthesis. In terms of biological role, converts cobyric acid to cobinamide by the addition of aminopropanol on the F carboxylic group. The sequence is that of Cobalamin biosynthesis protein CobD from Klebsiella pneumoniae subsp. pneumoniae (strain ATCC 700721 / MGH 78578).